The sequence spans 140 residues: Thioredoxin M-type, chloroplastic (140 aa).

A chloroplast-targeting transit peptide spans 1-34; sequence MALVARRAAVPSARSSARPAFARAAPRRSVVVRA. Residues 35-140 enclose the Thioredoxin domain; the sequence is EAGAVNDDTF…IVQTVEKYLN (106 aa). Catalysis depends on nucleophile residues Cys64 and Cys67. A disulfide bridge links Cys64 with Cys67.

It belongs to the thioredoxin family. Plant M-type subfamily. Forms a complex with heterodimeric ferredoxin-thioredoxin reductase (FTR) and ferredoxin.

The protein localises to the plastid. It is found in the chloroplast. Participates in various redox reactions through the reversible oxidation of the active center dithiol to a disulfide. The M form is known to activate NADP-malate dehydrogenase. The polypeptide is Thioredoxin M-type, chloroplastic (TRXM) (Chlamydomonas reinhardtii (Chlamydomonas smithii)).